A 767-amino-acid polypeptide reads, in one-letter code: Ribonucleoside-diphosphate reductase subunit alpha (767 aa).

Residues 1–30 form a disordered region; sequence MHPTLISAPISSSANDAHAGTSQGSHQGHR. Residues 9–26 are compositionally biased toward polar residues; it reads PISSSANDAHAGTSQGSH. One can recognise an ATP-cone domain in the interval 31 to 120; that stretch reads IQVIRRDGSS…VWSLWKDTLV (90 aa). Substrate-binding positions include threonine 228, 243–244, glycine 272, 460–464, and 631–635; these read SC, NLCCE, and PNTSS. A disulfide bridge connects residues cysteine 244 and cysteine 478. Residue asparagine 460 is the Proton acceptor of the active site. Cysteine 462 (cysteine radical intermediate) is an active-site residue. Catalysis depends on glutamate 464, which acts as the Proton acceptor.

This sequence belongs to the ribonucleoside diphosphate reductase large chain family. Tetramer of two alpha and two beta subunits.

The catalysed reaction is a 2'-deoxyribonucleoside 5'-diphosphate + [thioredoxin]-disulfide + H2O = a ribonucleoside 5'-diphosphate + [thioredoxin]-dithiol. With respect to regulation, under complex allosteric control mediated by deoxynucleoside triphosphates and ATP binding. The type of nucleotide bound at the specificity site determines substrate preference. It seems probable that ATP makes the enzyme reduce CDP and UDP, dGTP favors ADP reduction and dTTP favors GDP reduction. Its function is as follows. Provides the precursors necessary for DNA synthesis. Catalyzes the biosynthesis of deoxyribonucleotides from the corresponding ribonucleotides. This is Ribonucleoside-diphosphate reductase subunit alpha (nrdA) from Synechocystis sp. (strain ATCC 27184 / PCC 6803 / Kazusa).